An 87-amino-acid polypeptide reads, in one-letter code: DNA/RNA-binding protein Alba (87 aa).

The residue at position 9 (K9) is an N6-acetyllysine.

The protein belongs to the histone-like Alba family. Post-translationally, acetylated. Acetylation at Lys-9 decreases DNA-binding affinity.

It is found in the cytoplasm. The protein resides in the chromosome. Its function is as follows. Binds double-stranded DNA tightly but without sequence specificity. Involved in DNA compaction. The chain is DNA/RNA-binding protein Alba from Methanocaldococcus jannaschii (strain ATCC 43067 / DSM 2661 / JAL-1 / JCM 10045 / NBRC 100440) (Methanococcus jannaschii).